The primary structure comprises 397 residues: Pectate lyase (397 aa).

A signal peptide spans 1-25 (MDVYRIRISVFFLLVLLTFAALTTA). Asn134 carries an N-linked (GlcNAc...) asparagine glycan. Residues Asp191, Asp216, and Asp220 each contribute to the Ca(2+) site. N-linked (GlcNAc...) asparagine glycosylation occurs at Asn227. Arg272 is an active-site residue.

The protein belongs to the polysaccharide lyase 1 family. Ca(2+) serves as cofactor.

The catalysed reaction is Eliminative cleavage of (1-&gt;4)-alpha-D-galacturonan to give oligosaccharides with 4-deoxy-alpha-D-galact-4-enuronosyl groups at their non-reducing ends.. The protein operates within glycan metabolism; pectin degradation; 2-dehydro-3-deoxy-D-gluconate from pectin: step 2/5. In Nicotiana tabacum (Common tobacco), this protein is Pectate lyase.